A 385-amino-acid polypeptide reads, in one-letter code: Glucans biosynthesis protein C (385 aa).

10 helical membrane-spanning segments follow: residues 17 to 37, 60 to 80, 91 to 111, 137 to 157, 173 to 193, 212 to 232, 239 to 259, 274 to 294, 311 to 331, and 338 to 358; these read AWLM…SHTW, MQVF…RYPL, VGIP…IMLQ, ISHL…VWIF, KFSM…YAVI, FIVM…LAFI, LFTT…VAYL, TESV…FSFG, ASLF…AYIT, and WLGF…LYEI.

This sequence belongs to the acyltransferase 3 family. OpgC subfamily.

The protein resides in the cell membrane. It functions in the pathway glycan metabolism; osmoregulated periplasmic glucan (OPG) biosynthesis. In terms of biological role, necessary for the succinyl substitution of periplasmic glucans. Could catalyze the transfer of succinyl residues from the cytoplasmic side of the membrane to the nascent glucan backbones on the periplasmic side of the membrane. The protein is Glucans biosynthesis protein C of Escherichia coli O6:K15:H31 (strain 536 / UPEC).